Consider the following 227-residue polypeptide: Glial cell line-derived neurotrophic factor (227 aa).

A signal peptide spans 1–19; that stretch reads MKLWAILAVCILLLSSVSS. Residues 20-93 constitute a propeptide that is removed on maturation; the sequence is IPLPSNWLAG…EFIQDTIKRL (74 aa). Disordered stretches follow at residues 32–61 and 93–113; these read RSHL…ANMA and LKRS…QSLA. Intrachain disulfides connect C134–C195, C161–C224, and C165–C226. Residues N142 and N178 are each glycosylated (N-linked (GlcNAc...) asparagine).

The protein belongs to the TGF-beta family. GDNF subfamily. In terms of assembly, homodimer; disulfide-linked. Interacts with GFRA1 coreceptor and RET: forms a 2:2:2 ternary complex composed of GDNF ligand, GFRA1 and RET receptor. From stage 22, expressed in somites and the pronephros. At stage 24 and 26, expressed in the pharyngeal arches I-III. At stage 31, expression in the eye, central nervous system and pharyngeal arches IV and V increases. Up to stage 34, expression becomes intense at the oral cavity and lateral line structures. At this stage, expression weakens in the pharyngeal arches, and increases in the epibranchial arches. Expressed in the digestive tract in stage 34 embryos.

Its subcellular location is the secreted. Neurotrophic factor that enhances survival and morphological differentiation of dopaminergic neurons and increases their high-affinity dopamine uptake. Acts by binding to its coreceptor, GFRA1, leading to autophosphorylation and activation of the RET receptor. The polypeptide is Glial cell line-derived neurotrophic factor (Xenopus laevis (African clawed frog)).